The chain runs to 537 residues: Probable glucomannan 4-beta-mannosyltransferase 15 (537 aa).

A helical transmembrane segment spans residues 50–70 (FIVPLFKCIVVMCLIISLLVF). The active site involves Asp150. Substrate contacts are provided by Asp209 and Asp211. Residue Asp303 is part of the active site. 4 helical membrane passes run 382 to 402 (IVVH…SVFL), 418 to 438 (VITL…IFWV), 494 to 514 (EMMM…FGNA), and 515 to 535 (FLYL…VGFV).

This sequence belongs to the glycosyltransferase 2 family. Plant cellulose synthase-like A subfamily.

Its subcellular location is the golgi apparatus membrane. It catalyses the reaction GDP-mannose + (glucomannan)n = GDP + (glucomannan)n+1.. Probable mannan synthase which consists of a 4-beta-mannosyltransferase activity on mannan using GDP-mannose. The beta-1,4-mannan product is the backbone for galactomannan synthesis by galactomannan galactosyltransferase. Galactomannan is a noncellulosic polysaccharides of plant cell wall. The sequence is that of Probable glucomannan 4-beta-mannosyltransferase 15 from Arabidopsis thaliana (Mouse-ear cress).